Consider the following 241-residue polypeptide: Translation initiation factor IF-3 (241 aa).

A compositionally biased stretch (basic and acidic residues) spans 193 to 203 (AAEKARQKAIQ). The interval 193-241 (AAEKARQKAIQEGRAAPAQDDTEDEEIEKLERELEEQDDEDDDEAEATE) is disordered. The segment covering 212–241 (DDTEDEEIEKLERELEEQDDEDDDEAEATE) has biased composition (acidic residues).

It belongs to the IF-3 family. Monomer.

Its subcellular location is the cytoplasm. IF-3 binds to the 30S ribosomal subunit and shifts the equilibrium between 70S ribosomes and their 50S and 30S subunits in favor of the free subunits, thus enhancing the availability of 30S subunits on which protein synthesis initiation begins. This is Translation initiation factor IF-3 from Sorangium cellulosum (strain So ce56) (Polyangium cellulosum (strain So ce56)).